An 816-amino-acid chain; its full sequence is Cation/H(+) antiporter 8 (816 aa).

12 helical membrane passes run 64-84, 97-117, 127-147, 163-183, 197-214, 227-247, 255-275, 297-317, 343-363, 382-402, 413-433, and 447-467; these read PKLE…NILF, MMLA…NSII, IDVA…LKGV, VTGV…FNLK, VMLL…ARLL, VALS…IANV, ADGL…FAVV, IHGV…LSQF, LESF…MLRT, FAVA…SVIV, SIIL…FYLF, and ILVL…GFLY.

Belongs to the monovalent cation:proton antiporter 2 (CPA2) transporter (TC 2.A.37) family. CHX (TC 2.A.37.4) subfamily. As to expression, specifically expressed in pollen.

Its subcellular location is the membrane. Its function is as follows. May operate as a cation/H(+) antiporter. This Arabidopsis thaliana (Mouse-ear cress) protein is Cation/H(+) antiporter 8 (CHX8).